We begin with the raw amino-acid sequence, 434 residues long: Tyrosine-protein phosphatase non-receptor type 1 (434 aa).

One can recognise a Tyrosine-protein phosphatase domain in the interval 3 to 277; that stretch reads IEKEFHRLDQ…RFSYLAVIEG (275 aa). Serine 50 carries the post-translational modification Phosphoserine. Substrate is bound by residues aspartate 181, 215-221, and glutamine 262; that span reads CSAGIGR. Catalysis depends on cysteine 215, which acts as the Phosphocysteine intermediate. Residues 291-319 form a disordered region; it reads WKELSNEDLDPPPEHTPPPPRPPKRTSEM.

It belongs to the protein-tyrosine phosphatase family. Non-receptor class 1 subfamily. In terms of assembly, interacts with EPHA3 (phosphorylated); dephosphorylates EPHA3 and may regulate its trafficking and function. Interacts with MET. Interacts with NCK1. In terms of processing, phosphorylated on serine and threonine residues near the N-terminus by casein kinase II (CK2).

The protein localises to the endoplasmic reticulum membrane. It carries out the reaction O-phospho-L-tyrosyl-[protein] + H2O = L-tyrosyl-[protein] + phosphate. In terms of biological role, may play an important role in CKII- and p60c-src-induced signal transduction cascades. May regulate the EFNA5-EPHA3 signaling pathway which modulates cell reorganization and cell-cell repulsion. May also regulate the hepatocyte growth factor receptor signaling pathway through dephosphorylation of MET. In Gallus gallus (Chicken), this protein is Tyrosine-protein phosphatase non-receptor type 1 (PTPN1).